Here is a 387-residue protein sequence, read N- to C-terminus: 1-deoxy-D-xylulose 5-phosphate reductoisomerase (387 aa).

Residues T10, G11, I13, N38, and N122 each coordinate NADPH. 1-deoxy-D-xylulose 5-phosphate is bound at residue K123. E124 is a binding site for NADPH. D148 serves as a coordination point for Mn(2+). Residues S149, E150, S174, and H197 each coordinate 1-deoxy-D-xylulose 5-phosphate. E150 contributes to the Mn(2+) binding site. Residue G203 coordinates NADPH. The 1-deoxy-D-xylulose 5-phosphate site is built by S210, N215, K216, and E219. E219 provides a ligand contact to Mn(2+).

Belongs to the DXR family. It depends on Mg(2+) as a cofactor. The cofactor is Mn(2+).

It catalyses the reaction 2-C-methyl-D-erythritol 4-phosphate + NADP(+) = 1-deoxy-D-xylulose 5-phosphate + NADPH + H(+). It participates in isoprenoid biosynthesis; isopentenyl diphosphate biosynthesis via DXP pathway; isopentenyl diphosphate from 1-deoxy-D-xylulose 5-phosphate: step 1/6. Functionally, catalyzes the NADPH-dependent rearrangement and reduction of 1-deoxy-D-xylulose-5-phosphate (DXP) to 2-C-methyl-D-erythritol 4-phosphate (MEP). This chain is 1-deoxy-D-xylulose 5-phosphate reductoisomerase, found in Ehrlichia ruminantium (strain Gardel).